The sequence spans 1823 residues: Laminin subunit alpha-4 (1823 aa).

Residues 1-24 form the signal peptide; sequence MALSSAWRSVLPLWLLWSAACSRA. Serine 39 carries O-linked (Xyl...) (chondroitin sulfate) serine glycosylation. Intrachain disulfides connect cysteine 82/cysteine 91, cysteine 84/cysteine 98, cysteine 101/cysteine 110, cysteine 113/cysteine 129, cysteine 132/cysteine 146, cysteine 134/cysteine 155, cysteine 157/cysteine 166, cysteine 169/cysteine 184, cysteine 187/cysteine 202, cysteine 189/cysteine 209, cysteine 212/cysteine 221, and cysteine 224/cysteine 238. Laminin EGF-like domains lie at 82 to 131, 132 to 186, and 187 to 240; these read CDCN…FCQP, CPCP…TCKK, and CDCS…NCAV. An N-linked (GlcNAc...) asparagine glycan is attached at asparagine 104. Asparagine 215 is a glycosylation site (N-linked (GlcNAc...) asparagine). Residues 241 to 255 form the Laminin EGF-like 4; truncated domain; it reads CNCGGGPCDSVTGEC. The interval 256–832 is domain II and I; sequence LEEGFEPPTG…AQTRSVASKI (577 aa). Residue asparagine 315 is glycosylated (N-linked (GlcNAc...) asparagine). Positions 320–403 form a coiled coil; the sequence is LLKTKLSERE…KIQEINNKML (84 aa). N-linked (GlcNAc...) asparagine glycosylation occurs at asparagine 465. The stretch at 473–528 forms a coiled coil; it reads VVLEQLDDYNAKLSDLQEALDQALNYVRDAEDMNRATAARQRDHEKQQERVREQME. N-linked (GlcNAc...) asparagine glycans are attached at residues asparagine 531, asparagine 557, asparagine 578, asparagine 581, asparagine 638, and asparagine 646. Positions 581-614 form a coiled coil; sequence NLSHDLVQEAIDHAQDLQQEANELSRKLHSSDMN. Residues 662 to 724 adopt a coiled-coil conformation; the sequence is IIYHKDESEN…AVKQLQAAER (63 aa). A Cell attachment site motif is present at residues 724–726; the sequence is RGD. N-linked (GlcNAc...) asparagine glycans are attached at residues asparagine 742, asparagine 758, asparagine 761, asparagine 787, and asparagine 810. A coiled-coil region spans residues 777-806; that stretch reads AVNSARDAVRNLTEVVPQLLDQLRTVEQKR. Laminin G-like domains are found at residues 833 to 1035, 1047 to 1227, and 1234 to 1402; these read QVSM…SVPC, AASY…GYGC, and SRRA…LYEC. A disulfide bridge links cysteine 1005 with cysteine 1035. N-linked (GlcNAc...) asparagine glycosylation is present at asparagine 1093. A disulfide bridge connects residues cysteine 1201 and cysteine 1227. N-linked (GlcNAc...) asparagine glycans are attached at residues asparagine 1288 and asparagine 1366. Cysteine 1370 and cysteine 1402 are disulfide-bonded. Asparagine 1418 carries N-linked (GlcNAc...) asparagine glycosylation. The segment at 1419–1440 is disordered; it reads LSKPKASQNKKGGKSKDAPSWD. 2 Laminin G-like domains span residues 1469–1640 and 1647–1820; these read AYQY…VTPC and TGTY…INSC. Disulfide bonds link cysteine 1617–cysteine 1640 and cysteine 1792–cysteine 1820.

As to quaternary structure, laminin is a complex glycoprotein, consisting of three different polypeptide chains (alpha, beta, gamma), which are bound to each other by disulfide bonds into a cross-shaped molecule comprising one long and three short arms with globules at each end. Alpha-4 is a subunit of laminin-8 (laminin-411), laminin-9 (laminin-421) and laminin-14 (laminin-423). In terms of tissue distribution, detected in placenta (at protein level). Detected in fibroblasts and urine (at protein level). In adult, strong expression in heart, lung, ovary small and large intestines, placenta, liver; weak or no expression in skeletal muscle, kidney, pancreas, testis, prostate, brain. High expression in fetal lung and kidney. Expression in fetal and newborn tissues is observed in certain mesenchymal cells in tissues such as smooth muscle and dermis.

The protein localises to the secreted. It localises to the extracellular space. It is found in the extracellular matrix. Its subcellular location is the basement membrane. In terms of biological role, binding to cells via a high affinity receptor, laminin is thought to mediate the attachment, migration and organization of cells into tissues during embryonic development by interacting with other extracellular matrix components. The polypeptide is Laminin subunit alpha-4 (LAMA4) (Homo sapiens (Human)).